The primary structure comprises 101 residues: Large ribosomal subunit protein uL23 (101 aa).

This sequence belongs to the universal ribosomal protein uL23 family. In terms of assembly, part of the 50S ribosomal subunit. Contacts protein L29, and trigger factor when it is bound to the ribosome.

In terms of biological role, one of the early assembly proteins it binds 23S rRNA. One of the proteins that surrounds the polypeptide exit tunnel on the outside of the ribosome. Forms the main docking site for trigger factor binding to the ribosome. The protein is Large ribosomal subunit protein uL23 of Corynebacterium diphtheriae (strain ATCC 700971 / NCTC 13129 / Biotype gravis).